The chain runs to 1585 residues: Sterol 3-beta-glucosyltransferase (1585 aa).

The segment covering 1-18 has biased composition (pro residues); sequence MSPPISPTPPPLQPPFPP. Disordered regions lie at residues 1 to 151, 177 to 225, and 249 to 279; these read MSPP…ESSF, PWEE…PTHT, and YQYA…LPKG. Polar residues-rich tracts occupy residues 65 to 92, 105 to 123, and 132 to 148; these read DQAT…NAIT, DAQT…STHE, and PRTS…QMAE. The span at 178–194 shows a compositional bias: acidic residues; it reads WEEDDDSDDGEDDDEFI. Low complexity predominate over residues 255-273; it reads ETSSRRTSAAGSESSSEGE. The GRAM 1 domain occupies 387–555; that stretch reads ERLMEVFGLE…EAIVDVEKSP (169 aa). The 93-residue stretch at 438-530 folds into the PH domain; sequence LLVKSGPLHK…WVKAIQKVMF (93 aa). 2 disordered regions span residues 625 to 645 and 666 to 852; these read TSHA…LGMA and DGEP…GSES. The span at 670 to 689 shows a compositional bias: basic and acidic residues; it reads LEEHSQGPHHNDEDASHLPH. Polar residues-rich tracts occupy residues 760–785, 806–817, and 827–840; these read TDSS…QASV, NKPSVVDSNSAE, and SWTS…QMVK. Positions 862–933 constitute a GRAM 2 domain; the sequence is RKFRTFFALS…RDLYGLKAQK (72 aa). UDP-alpha-D-glucose-binding residues include serine 1043, arginine 1044, aspartate 1046, isoleucine 1358, histidine 1360, histidine 1373, glycine 1377, threonine 1378, aspartate 1397, and glutamine 1398. A disordered region spans residues 1499 to 1552; that stretch reads NRVRSRSRSRSRSSQGRFSPRRHTVDDDGWSVVSGGSRSRSGSASAVTSPERRP. Positions 1529 to 1545 are enriched in low complexity; that stretch reads SVVSGGSRSRSGSASAV.

Belongs to the glycosyltransferase 28 family.

The protein localises to the cytoplasm. It localises to the membrane. It catalyses the reaction a sterol + UDP-alpha-D-glucose = a sterol 3-beta-D-glucoside + UDP + H(+). It carries out the reaction ergosterol + UDP-alpha-D-glucose = ergosteryl 3-beta-D-glucoside + UDP + H(+). In terms of biological role, sterol glycosyltransferase responsible for the glycosylation of ergosterol to form ergosterol-glucoside. This Cryptococcus neoformans var. neoformans serotype D (strain B-3501A) (Filobasidiella neoformans) protein is Sterol 3-beta-glucosyltransferase.